The chain runs to 525 residues: ATP synthase subunit alpha (525 aa).

An ATP-binding site is contributed by 171–178 (GDRQTGKS).

It belongs to the ATPase alpha/beta chains family. F-type ATPases have 2 components, CF(1) - the catalytic core - and CF(0) - the membrane proton channel. CF(1) has five subunits: alpha(3), beta(3), gamma(1), delta(1), epsilon(1). CF(0) has three main subunits: a(1), b(2) and c(9-12). The alpha and beta chains form an alternating ring which encloses part of the gamma chain. CF(1) is attached to CF(0) by a central stalk formed by the gamma and epsilon chains, while a peripheral stalk is formed by the delta and b chains.

The protein resides in the cell inner membrane. It catalyses the reaction ATP + H2O + 4 H(+)(in) = ADP + phosphate + 5 H(+)(out). Produces ATP from ADP in the presence of a proton gradient across the membrane. The alpha chain is a regulatory subunit. This is ATP synthase subunit alpha from Flavobacterium psychrophilum (strain ATCC 49511 / DSM 21280 / CIP 103535 / JIP02/86).